The primary structure comprises 282 residues: E3 ubiquitin-protein ligase SIAH1 (282 aa).

The segment covering 1-17 (MSRQTATALPTGTSKCP) has biased composition (polar residues). Positions 1 to 22 (MSRQTATALPTGTSKCPPSQRV) are disordered. Ser19 carries the post-translational modification Phosphoserine; by ATM and ATR. An RING-type zinc finger spans residues 41–76 (CPVCFDYVLPPILQCQSGHLVCSNCRPKLTCCPTCR). The SBD stretch occupies residues 90–282 (VANSVLFPCK…LGINVTISMC (193 aa)). The SIAH-type zinc-finger motif lies at 93-153 (SVLFPCKYAS…VMPHLMHQHK (61 aa)). The Zn(2+) site is built by Cys98, Cys105, His117, Cys121, Cys128, Cys135, His147, and His152.

The protein belongs to the SINA (Seven in absentia) family. Homodimer. Component of some large E3 complex composed of UBE2D1, SIAH1, CACYBP/SIP, SKP1, APC and TBL1X. Interacts with UBE2I. Interacts with alpha-tubulin. Interacts with PEG10, which may inhibit its activity. Interacts with PEG3 and HIPK2. Interacts with group 1 glutamate receptors GRM1 and GRM5. Interacts with DAB1, which may inhibit its activity. Interacts with UBE2E2. Interacts with SNCAIP. Interacts with HIPK2; the interaction is promoted by DAZAP2 and results in SIAH1-mediated ubiquitination and subsequent proteasomal degradation of HIPK2. Interacts with DAZAP2; the interaction is decreased following phosphorylation of DAZAP2 by HIPK2. Interacts with GAPDH; leading to stabilize SIAH1. Interacts with Bassoon/BSN and Piccolo/PLCO; these interactions negatively regulate SIAH1 E3 ligase activity. Interacts with DCC. Interacts with AXIN1; catalyzes AXIN1 ubiquitination and subsequent proteasome-mediated ubiquitin-dependent degradation. Phosphorylated on Ser-19 by ATM and ATR. This phosphorylation disrupts SIAH1 interaction with HIPK2, and subsequent proteasomal degradation of HIPK2.

It localises to the cytoplasm. Its subcellular location is the nucleus. The catalysed reaction is S-ubiquitinyl-[E2 ubiquitin-conjugating enzyme]-L-cysteine + [acceptor protein]-L-lysine = [E2 ubiquitin-conjugating enzyme]-L-cysteine + N(6)-ubiquitinyl-[acceptor protein]-L-lysine.. It functions in the pathway protein modification; protein ubiquitination. Functionally, E3 ubiquitin-protein ligase that mediates ubiquitination and subsequent proteasomal degradation of target proteins. E3 ubiquitin ligases accept ubiquitin from an E2 ubiquitin-conjugating enzyme in the form of a thioester and then directly transfers the ubiquitin to targeted substrates. Mediates E3 ubiquitin ligase activity either through direct binding to substrates or by functioning as the essential RING domain subunit of larger E3 complexes. Triggers the ubiquitin-mediated degradation of many substrates, including proteins involved in transcription regulation (ELL2, MYB, POU2AF1, PML and RBBP8), a cell surface receptor (DCC), cytoplasmic signal transduction molecules (KLF10/TIEG1 and NUMB), an antiapoptotic protein (BAG1), a microtubule motor protein (KIF22), a protein involved in synaptic vesicle function in neurons (SYP), a structural protein (CTNNB1) and SNCAIP. Confers constitutive instability to HIPK2 through proteasomal degradation. It is thereby involved in many cellular processes such as apoptosis, tumor suppression, cell cycle, axon guidance, transcription, spermatogenesis and TNF-alpha signaling. Has some overlapping function with SIAH2. Induces apoptosis in cooperation with PEG3. Upon nitric oxid (NO) generation that follows apoptotic stimulation, interacts with S-nitrosylated GAPDH, mediating the translocation of GAPDH to the nucleus. GAPDH acts as a stabilizer of SIAH1, facilitating the degradation of nuclear proteins. Mediates ubiquitination and degradation of EGLN2 and EGLN3 in response to the unfolded protein response (UPR), leading to their degradation and subsequent stabilization of ATF4. Also part of the Wnt signaling pathway in which it mediates the Wnt-induced ubiquitin-mediated proteasomal degradation of AXIN1. This is E3 ubiquitin-protein ligase SIAH1 (Siah1) from Rattus norvegicus (Rat).